The chain runs to 135 residues: Putative pre-16S rRNA nuclease (135 aa).

It belongs to the YqgF nuclease family.

The protein resides in the cytoplasm. Its function is as follows. Could be a nuclease involved in processing of the 5'-end of pre-16S rRNA. The polypeptide is Putative pre-16S rRNA nuclease (Buchnera aphidicola subsp. Acyrthosiphon pisum (strain 5A)).